Reading from the N-terminus, the 197-residue chain is Lipoprotein signal peptidase (197 aa).

Transmembrane regions (helical) follow at residues 73–93 (SNAIFLITNTLIVCYLYYLMI) and 97–117 (TIGSFAGYSFVIGGAVGNLID). Residues aspartate 126 and aspartate 144 contribute to the active site. A helical membrane pass occupies residues 135 to 155 (YSFPVFNLADCFITIGVIILI).

Belongs to the peptidase A8 family.

Its subcellular location is the cell inner membrane. It catalyses the reaction Release of signal peptides from bacterial membrane prolipoproteins. Hydrolyzes -Xaa-Yaa-Zaa-|-(S,diacylglyceryl)Cys-, in which Xaa is hydrophobic (preferably Leu), and Yaa (Ala or Ser) and Zaa (Gly or Ala) have small, neutral side chains.. Its pathway is protein modification; lipoprotein biosynthesis (signal peptide cleavage). Functionally, this protein specifically catalyzes the removal of signal peptides from prolipoproteins. The protein is Lipoprotein signal peptidase of Rickettsia felis (strain ATCC VR-1525 / URRWXCal2) (Rickettsia azadi).